We begin with the raw amino-acid sequence, 356 residues long: Histidinol-phosphate aminotransferase (356 aa).

Position 214 is an N6-(pyridoxal phosphate)lysine (K214).

It belongs to the class-II pyridoxal-phosphate-dependent aminotransferase family. Histidinol-phosphate aminotransferase subfamily. In terms of assembly, homodimer. Pyridoxal 5'-phosphate serves as cofactor.

The catalysed reaction is L-histidinol phosphate + 2-oxoglutarate = 3-(imidazol-4-yl)-2-oxopropyl phosphate + L-glutamate. It functions in the pathway amino-acid biosynthesis; L-histidine biosynthesis; L-histidine from 5-phospho-alpha-D-ribose 1-diphosphate: step 7/9. This Escherichia coli O6:K15:H31 (strain 536 / UPEC) protein is Histidinol-phosphate aminotransferase.